A 311-amino-acid chain; its full sequence is MSRAKAKDPRFPDFSFTVVEGARATRVPGGRTIEEIEPEYKIKGRTTFSAIFRYDPFDFWVGPFYVGFWGFVSVIGIIFGSYFYINETILKGPYSIPQNFFAGRIDPPPPELGLGFAAPGEPGFAWQMTVLFATIAFFGWMMRQVDISMKLDMGYHVPIAFGVAFSAWLVLQVIRPIALGMWHEGFVLGIMPHLDWVSNFGYRYNNFFYNPFHAIGITGLFASTWLLACHGSLILSAAQYRGPEGGDIENVFFRDVQYYSVGESGVHRLGYIFAIGGILSADLCILLSGWPVQDWVSFWNFWNNLPFWSGV.

A run of 3 helical transmembrane segments spans residues 68–90 (FWGF…ETIL), 123–151 (GFAW…SMKL), and 156–178 (HVPI…RPIA). (7R,8Z)-bacteriochlorophyll b-binding residues include histidine 183 and histidine 213. Residues 211 to 238 (PFHAIGITGLFASTWLLACHGSLILSAA) form a helical membrane-spanning segment. Histidine 230 contacts Fe cation. Position 253 (phenylalanine 253) interacts with a ubiquinone. The helical transmembrane segment at 262 to 287 (GESGVHRLGYIFAIGGILSADLCILL) threads the bilayer. Residue histidine 267 coordinates Fe cation.

This sequence belongs to the reaction center PufL/M/PsbA/D family. Reaction center is composed of four bacteriochlorophylls, two bacteriopheophytins, two ubiquinones, one iron, and two highly hydrophobic polypeptide chains (designated L and M).

It localises to the cell membrane. Functionally, the reaction center is a membrane-bound complex that mediates the initial photochemical event in the electron transfer process of photosynthesis. The sequence is that of Reaction center protein L chain (pufL) from Chloroflexus aurantiacus (strain ATCC 29366 / DSM 635 / J-10-fl).